A 1157-amino-acid chain; its full sequence is Zinc finger protein 516 (1157 aa).

Positions 1–13 are enriched in basic and acidic residues; it reads MDRSREAEMELRR. The interval 1–26 is disordered; that stretch reads MDRSREAEMELRRGPSPPRAGRSHEV. The segment at 1–420 is mediates promoter DNA-binding and activation of transcription; that stretch reads MDRSREAEME…ATRGKVAEPA (420 aa). C2H2-type zinc fingers lie at residues 34–56, 62–84, 162–185, 188–211, 236–258, 264–286, and 323–345; these read HSCC…MRKH, YKCP…IRSH, VPCS…HQAH, FKCR…ERDH, FPCE…MKKH, HGCH…MKAH, and EVCT…NAIH. The segment covering 449-458 has biased composition (basic and acidic residues); it reads SQEKRKREQD. Disordered stretches follow at residues 449 to 503 and 523 to 653; these read SQEK…QGKS and SRVH…KGPE. A compositionally biased stretch (polar residues) spans 494 to 503; the sequence is ASATTGQGKS. The C2H2-type 8 zinc finger occupies 504–526; sequence SECFECGKIFRTYHQMVLHSRVH. A compositionally biased stretch (basic and acidic residues) spans 531 to 541; the sequence is RDRDPEGDRAA. A compositionally biased stretch (polar residues) spans 550–561; that stretch reads EGDSASQPSSPG. Residues 575–585 show a composition bias toward acidic residues; that stretch reads EVVDDSGEEAV. Positions 601-612 are enriched in polar residues; sequence GEVTPTALSNGD. K630 participates in a covalent cross-link: Glycyl lysine isopeptide (Lys-Gly) (interchain with G-Cter in SUMO2). Residues 644–653 are compositionally biased toward basic and acidic residues; it reads SSRETTKGPE. K669 is covalently cross-linked (Glycyl lysine isopeptide (Lys-Gly) (interchain with G-Cter in SUMO2)). The C2H2-type 9; atypical zinc finger occupies 753–776; the sequence is HPCPYCTHKTYYPEVLWMHKRIWH. Disordered regions lie at residues 831–996 and 1013–1040; these read TQVP…EPSV and RGEA…AEGQ. A compositionally biased stretch (polar residues) spans 914–928; it reads GSGSLSRSTTPTPSV. Residues K1032 and K1051 each participate in a glycyl lysine isopeptide (Lys-Gly) (interchain with G-Cter in SUMO2) cross-link. The C2H2-type 10 zinc-finger motif lies at 1092–1114; it reads FVCVECGKSFHQPSQLRAHLRAH. Positions 1123-1157 are disordered; the sequence is PRDSEVHTASTDAPKQGRDHTTPGTVPAGPLRKGI.

The protein belongs to the krueppel C2H2-type zinc-finger protein family. Interacts with PRDM16; the interaction is direct and may play a role in the transcription of brown adipose tissue-specific genes. Interacts with PWWP2B. Interacts with HDAC1; this interaction is enhanced in the presence of PWWP2B. In terms of tissue distribution, expressed by adipocytes more specifically in brown adipose tissue compared to white adipose tissue (WAT).

Its subcellular location is the nucleus. Transcriptional regulator that binds to the promoter and activates the transcription of genes promoting brown adipose tissue (BAT) differentiation. Among brown adipose tissue-specific genes, binds the proximal region of the promoter of the UCP1 gene to activate its transcription and thereby regulate thermogenesis. May also play a role in the cellular response to replication stress. The protein is Zinc finger protein 516 of Mus musculus (Mouse).